A 438-amino-acid polypeptide reads, in one-letter code: Trigger factor (438 aa).

In terms of domain architecture, PPIase FKBP-type spans 160–245 (DDKVTIDFVG…VKKIQQAELP (86 aa)).

The protein belongs to the FKBP-type PPIase family. Tig subfamily.

Its subcellular location is the cytoplasm. The catalysed reaction is [protein]-peptidylproline (omega=180) = [protein]-peptidylproline (omega=0). Involved in protein export. Acts as a chaperone by maintaining the newly synthesized protein in an open conformation. Functions as a peptidyl-prolyl cis-trans isomerase. The polypeptide is Trigger factor (Francisella tularensis subsp. mediasiatica (strain FSC147)).